Consider the following 995-residue polypeptide: DExH-box ATP-dependent RNA helicase DExH1 (995 aa).

Disordered stretches follow at residues 1–42 (MPPH…EQRW) and 156–192 (KTTQ…ASKL). Over residues 25–37 (RGGGGRGGGGGGR) the composition is skewed to gly residues. The segment covering 161 to 170 (SGSSGASASA) has biased composition (low complexity). Over residues 171 to 181 (FNDQQDRTSTL) the composition is skewed to polar residues. One can recognise a Helicase ATP-binding domain in the interval 238-405 (LNSVSQNQVL…FGNSPTMHIP (168 aa)). Residue 251 to 258 (GETGCGKT) participates in ATP binding. Residues 352–355 (DEIH) carry the DEIH box motif. The disordered stretch occupies residues 429–450 (SSDSGNYQGSSRGRRRESESKK). The Helicase C-terminal domain occupies 484–663 (QIDVDLVEAT…ELCLHIKSLQ (180 aa)).

The protein belongs to the DExH box helicase family.

It carries out the reaction ATP + H2O = ADP + phosphate + H(+). This Arabidopsis thaliana (Mouse-ear cress) protein is DExH-box ATP-dependent RNA helicase DExH1.